A 364-amino-acid chain; its full sequence is Mitogen-activated protein kinase 11 (364 aa).

Residues 24–308 (LQGLRPVGSG…AAEALAHAYF (285 aa)) form the Protein kinase domain. ATP is bound by residues 30 to 38 (VGSGAYGSV) and lysine 53. Glutamate 71 contributes to the nilotinib binding site. Aspartate 168 functions as the Proton acceptor in the catalytic mechanism. Phosphothreonine; by MAP2K3, MAP2K4 and MAP2K6 is present on threonine 180. The short motif at 180-182 (TGY) is the TXY element. Tyrosine 182 carries the post-translational modification Phosphotyrosine; by MAP2K3, MAP2K4 and MAP2K6. The tract at residues 312–331 (HDPDDEPEAEPYDESVEAKE) is disordered. Residues 314–326 (PDDEPEAEPYDES) are compositionally biased toward acidic residues. Tyrosine 323 bears the Phosphotyrosine; by ZAP70 mark.

It belongs to the protein kinase superfamily. CMGC Ser/Thr protein kinase family. MAP kinase subfamily. In terms of assembly, interacts with HDAC3 and DUSP16. Mg(2+) is required as a cofactor. Dually phosphorylated on Thr-180 and Tyr-182 by MAP2K3/MKK3, MAP2K4/MKK4 and MAP2K6/MKK6, which activates the enzyme.

It is found in the cytoplasm. It localises to the nucleus. It carries out the reaction L-seryl-[protein] + ATP = O-phospho-L-seryl-[protein] + ADP + H(+). The enzyme catalyses L-threonyl-[protein] + ATP = O-phospho-L-threonyl-[protein] + ADP + H(+). With respect to regulation, activated by phosphorylation on threonine and tyrosine by MAP2K3/MKK3, MAP2K4/MKK4 and MAP2K6/MKK6. MAP2K3/MKK3 and MAP2K6/MKK6 are both essential for the activation of MAPK11 induced by environmental stress. HDAC3 interacts directly and selectively with MAPK11 to repress ATF2 transcriptional activity, and regulate TNF gene expression in LPS-stimulated cells. Inhibited by SB203580 and pyridinyl-imidazole related compounds. Functionally, serine/threonine kinase which acts as an essential component of the MAP kinase signal transduction pathway. MAPK11 is one of the four p38 MAPKs which play an important role in the cascades of cellular responses evoked by extracellular stimuli such as pro-inflammatory cytokines or physical stress leading to direct activation of transcription factors. Accordingly, p38 MAPKs phosphorylate a broad range of proteins and it has been estimated that they may have approximately 200 to 300 substrates each. MAPK11 functions are mostly redundant with those of MAPK14. Some of the targets are downstream kinases which are activated through phosphorylation and further phosphorylate additional targets. RPS6KA5/MSK1 and RPS6KA4/MSK2 can directly phosphorylate and activate transcription factors such as CREB1, ATF1, the NF-kappa-B isoform RELA/NFKB3, STAT1 and STAT3, but can also phosphorylate histone H3 and the nucleosomal protein HMGN1. RPS6KA5/MSK1 and RPS6KA4/MSK2 play important roles in the rapid induction of immediate-early genes in response to stress or mitogenic stimuli, either by inducing chromatin remodeling or by recruiting the transcription machinery. On the other hand, two other kinase targets, MAPKAPK2/MK2 and MAPKAPK3/MK3, participate in the control of gene expression mostly at the post-transcriptional level, by phosphorylating ZFP36 (tristetraprolin) and ELAVL1, and by regulating EEF2K, which is important for the elongation of mRNA during translation. MKNK1/MNK1 and MKNK2/MNK2, two other kinases activated by p38 MAPKs, regulate protein synthesis by phosphorylating the initiation factor EIF4E2. In the cytoplasm, the p38 MAPK pathway is an important regulator of protein turnover. For example, CFLAR is an inhibitor of TNF-induced apoptosis whose proteasome-mediated degradation is regulated by p38 MAPK phosphorylation. Ectodomain shedding of transmembrane proteins is regulated by p38 MAPKs as well. In response to inflammatory stimuli, p38 MAPKs phosphorylate the membrane-associated metalloprotease ADAM17. Such phosphorylation is required for ADAM17-mediated ectodomain shedding of TGF-alpha family ligands, which results in the activation of EGFR signaling and cell proliferation. Additional examples of p38 MAPK substrates are the FGFR1. FGFR1 can be translocated from the extracellular space into the cytosol and nucleus of target cells, and regulates processes such as rRNA synthesis and cell growth. FGFR1 translocation requires p38 MAPK activation. In the nucleus, many transcription factors are phosphorylated and activated by p38 MAPKs in response to different stimuli. Classical examples include ATF1, ATF2, ATF6, ELK1, PTPRH, DDIT3, TP53/p53 and MEF2C and MEF2A. The p38 MAPKs are emerging as important modulators of gene expression by regulating chromatin modifiers and remodelers. The promoters of several genes involved in the inflammatory response, such as IL6, IL8 and IL12B, display a p38 MAPK-dependent enrichment of histone H3 phosphorylation on 'Ser-10' (H3S10ph) in LPS-stimulated myeloid cells. This phosphorylation enhances the accessibility of the cryptic NF-kappa-B-binding sites marking promoters for increased NF-kappa-B recruitment. Phosphorylates methyltransferase DOT1L on 'Ser-834', 'Thr-900', 'Ser-902', 'Thr-984', 'Ser-1001', 'Ser-1009' and 'Ser-1104'. The protein is Mitogen-activated protein kinase 11 (Mapk11) of Mus musculus (Mouse).